The sequence spans 247 residues: ATP synthase subunit a (247 aa).

The next 6 helical transmembrane spans lie at 23 to 43 (ISFT…TLFL), 90 to 110 (LFMF…VIGF), 116 to 136 (VIVT…IGFA), 145 to 165 (MFFP…IELI), 194 to 214 (GFVV…FAFL), and 215 to 235 (SAIT…FTIL).

This sequence belongs to the ATPase A chain family. F-type ATPases have 2 components, CF(1) - the catalytic core - and CF(0) - the membrane proton channel. CF(1) has five subunits: alpha(3), beta(3), gamma(1), delta(1), epsilon(1). CF(0) has three main subunits: a(1), b(2) and c(9-12). The alpha and beta chains form an alternating ring which encloses part of the gamma chain. CF(1) is attached to CF(0) by a central stalk formed by the gamma and epsilon chains, while a peripheral stalk is formed by the delta and b chains.

It localises to the cell inner membrane. In terms of biological role, key component of the proton channel; it plays a direct role in the translocation of protons across the membrane. The polypeptide is ATP synthase subunit a (Paramagnetospirillum magneticum (strain ATCC 700264 / AMB-1) (Magnetospirillum magneticum)).